A 385-amino-acid polypeptide reads, in one-letter code: Probable thioesterase PNKD (385 aa).

The segment covering N31–Q42 has biased composition (polar residues). The tract at residues N31–S57 is disordered. Zn(2+)-binding residues include H172, H174, D176, H177, H229, D253, and H291.

It belongs to the metallo-beta-lactamase superfamily. Glyoxalase II family. Zn(2+) is required as a cofactor. In terms of processing, undergoes cleavage at the N-terminus.

Its subcellular location is the cell membrane. It is found in the mitochondrion. It carries out the reaction a thioester + H2O = a thiol + a carboxylate + H(+). In terms of biological role, probable thioesterase that may play a role in cellular detoxification processes; it likely acts on a yet-unknown alpha-hydroxythioester substrate. In vitro, it is able to catalyze the hydrolysis of S-D-lactoyl-glutathione to form glutathione and D-lactic acid at very low rate, though this reaction is not physiologically relevant in vivo. This Bos taurus (Bovine) protein is Probable thioesterase PNKD (PNKD).